A 408-amino-acid chain; its full sequence is tRNA-specific 2-thiouridylase MnmA (408 aa).

ATP-binding positions include 20-27 and leucine 46; that span reads AMSGGVDS. The Nucleophile role is filled by cysteine 114. Cysteine 114 and cysteine 210 are joined by a disulfide. Residue glycine 138 coordinates ATP. Positions 160–162 are interaction with tRNA; it reads RDQ. Residue cysteine 210 is the Cysteine persulfide intermediate of the active site.

Belongs to the MnmA/TRMU family.

The protein resides in the cytoplasm. It catalyses the reaction S-sulfanyl-L-cysteinyl-[protein] + uridine(34) in tRNA + AH2 + ATP = 2-thiouridine(34) in tRNA + L-cysteinyl-[protein] + A + AMP + diphosphate + H(+). Functionally, catalyzes the 2-thiolation of uridine at the wobble position (U34) of tRNA, leading to the formation of s(2)U34. The polypeptide is tRNA-specific 2-thiouridylase MnmA (Bartonella quintana (strain Toulouse) (Rochalimaea quintana)).